The chain runs to 185 residues: Ribosome-recycling factor (185 aa).

It belongs to the RRF family.

The protein localises to the cytoplasm. Its function is as follows. Responsible for the release of ribosomes from messenger RNA at the termination of protein biosynthesis. May increase the efficiency of translation by recycling ribosomes from one round of translation to another. This Enterobacter sp. (strain 638) protein is Ribosome-recycling factor.